The sequence spans 123 residues: Large ribosomal subunit protein bL19 (123 aa).

This sequence belongs to the bacterial ribosomal protein bL19 family.

Functionally, this protein is located at the 30S-50S ribosomal subunit interface and may play a role in the structure and function of the aminoacyl-tRNA binding site. This is Large ribosomal subunit protein bL19 from Ureaplasma urealyticum serovar 10 (strain ATCC 33699 / Western).